A 642-amino-acid chain; its full sequence is Threonine--tRNA ligase (642 aa).

In terms of domain architecture, TGS spans Met-1 to Thr-61. The interval Asp-243 to Pro-534 is catalytic. Positions 334, 385, and 511 each coordinate Zn(2+).

This sequence belongs to the class-II aminoacyl-tRNA synthetase family. Homodimer. The cofactor is Zn(2+).

It localises to the cytoplasm. It carries out the reaction tRNA(Thr) + L-threonine + ATP = L-threonyl-tRNA(Thr) + AMP + diphosphate + H(+). Functionally, catalyzes the attachment of threonine to tRNA(Thr) in a two-step reaction: L-threonine is first activated by ATP to form Thr-AMP and then transferred to the acceptor end of tRNA(Thr). Also edits incorrectly charged L-seryl-tRNA(Thr). The chain is Threonine--tRNA ligase from Pectobacterium atrosepticum (strain SCRI 1043 / ATCC BAA-672) (Erwinia carotovora subsp. atroseptica).